The following is a 304-amino-acid chain: MKQRFGKVAVLFGGSSAERDVSLMSGAAVLAALQGAGVDAHAFDPAERDLHILKEEGYDRVFIALHGRGGEDGTVQGALELMGIPYTGSGVMASALAMDKWRTKMVWLSCGLPTPRYAILDADSDFDAIARDLGLPIFVKPVHEGSSMGATKVTEAGQLRAAWELAARYDSLVIAEEFISGQELTAPFLDDRALPLVRIVAPDGNYDYQHKYFTDDTRYDCPCGLPQAEEEALQALILKSARVLGCRGWGRADLILTPEGRPYLLEMNTSPGMTGHSLVPMSARVAGMSFEALCLAILAGARLG.

The ATP-grasp domain occupies 104-299 (KMVWLSCGLP…FEALCLAILA (196 aa)). 130 to 185 (ARDLGLPIFVKPVHEGSSMGATKVTEAGQLRAAWELAARYDSLVIAEEFISGQELT) is a binding site for ATP. Residues Asp-253, Glu-266, and Asn-268 each coordinate Mg(2+).

The protein belongs to the D-alanine--D-alanine ligase family. The cofactor is Mg(2+). Requires Mn(2+) as cofactor.

Its subcellular location is the cytoplasm. It catalyses the reaction 2 D-alanine + ATP = D-alanyl-D-alanine + ADP + phosphate + H(+). It participates in cell wall biogenesis; peptidoglycan biosynthesis. Cell wall formation. This chain is D-alanine--D-alanine ligase, found in Azoarcus sp. (strain BH72).